Consider the following 83-residue polypeptide: Transmembrane protein EP84R (83 aa).

A run of 2 helical transmembrane segments spans residues 31-51 and 59-79; these read IIGVILLVICLLFILIGIIIL and AGSIFVVLSLILGGGGFFLIY.

It belongs to the asfivirus EP84R family.

Its subcellular location is the virion membrane. This chain is Transmembrane protein EP84R, found in Ornithodoros (relapsing fever ticks).